The following is a 196-amino-acid chain: Holliday junction branch migration complex subunit RuvA (196 aa).

Residues 1–63 are domain I; it reads MYDYIKGKLS…DDAHLLFGFH (63 aa). Positions 64 to 142 are domain II; sequence TENEKEIFLN…EASGESATSR (79 aa). Positions 143 to 148 are flexible linker; that stretch reads KVSSEQ. Positions 148–196 are domain III; that stretch reads QNSNLEEAMEALLALGYKATELKKVKAFFEGTNETVEQYIKSSLKMLMK.

The protein belongs to the RuvA family. In terms of assembly, homotetramer. Forms an RuvA(8)-RuvB(12)-Holliday junction (HJ) complex. HJ DNA is sandwiched between 2 RuvA tetramers; dsDNA enters through RuvA and exits via RuvB. An RuvB hexamer assembles on each DNA strand where it exits the tetramer. Each RuvB hexamer is contacted by two RuvA subunits (via domain III) on 2 adjacent RuvB subunits; this complex drives branch migration. In the full resolvosome a probable DNA-RuvA(4)-RuvB(12)-RuvC(2) complex forms which resolves the HJ.

Its subcellular location is the cytoplasm. In terms of biological role, the RuvA-RuvB-RuvC complex processes Holliday junction (HJ) DNA during genetic recombination and DNA repair, while the RuvA-RuvB complex plays an important role in the rescue of blocked DNA replication forks via replication fork reversal (RFR). RuvA specifically binds to HJ cruciform DNA, conferring on it an open structure. The RuvB hexamer acts as an ATP-dependent pump, pulling dsDNA into and through the RuvAB complex. HJ branch migration allows RuvC to scan DNA until it finds its consensus sequence, where it cleaves and resolves the cruciform DNA. This chain is Holliday junction branch migration complex subunit RuvA, found in Streptococcus agalactiae serotype III (strain NEM316).